The following is a 714-amino-acid chain: Putative glutamine--fructose-6-phosphate aminotransferase [isomerizing] (714 aa).

C2 acts as the Nucleophile; for GATase activity in catalysis. Residues 2–321 form the Glutamine amidotransferase type-2 domain; sequence CGIFGYCNFL…DNDIAHIYDG (320 aa). Polar residues predominate over residues 266 to 280; the sequence is STTSTFNHGSSTETP. Residues 266–285 form a disordered region; that stretch reads STTSTFNHGSSTETPAENGL. SIS domains are found at residues 387 to 526 and 559 to 704; these read WLTE…DLVS and CDKK…VDLP.

The catalysed reaction is D-fructose 6-phosphate + L-glutamine = D-glucosamine 6-phosphate + L-glutamate. Its pathway is nucleotide-sugar biosynthesis; UDP-N-acetyl-alpha-D-glucosamine biosynthesis; alpha-D-glucosamine 6-phosphate from D-fructose 6-phosphate: step 1/1. In terms of biological role, involved in amino sugar synthesis (formation of chitin, supplies the amino sugars of asparagine-linked oligosaccharides of glycoproteins). The protein is Putative glutamine--fructose-6-phosphate aminotransferase [isomerizing] of Saccharomyces cerevisiae (strain YJM789) (Baker's yeast).